Consider the following 512-residue polypeptide: GMP synthase [glutamine-hydrolyzing] (512 aa).

One can recognise a Glutamine amidotransferase type-1 domain in the interval 6 to 195 (KIIILDFGSQ…VFNICGCQPK (190 aa)). Cys-83 functions as the Nucleophile in the catalytic mechanism. Active-site residues include His-169 and Glu-171. In terms of domain architecture, GMPS ATP-PPase spans 196–387 (WKITEFISAA…LGIDFKFVYK (192 aa)). ATP is bound at residue 223–229 (SGGVDSS).

As to quaternary structure, homodimer.

It catalyses the reaction XMP + L-glutamine + ATP + H2O = GMP + L-glutamate + AMP + diphosphate + 2 H(+). The protein operates within purine metabolism; GMP biosynthesis; GMP from XMP (L-Gln route): step 1/1. Functionally, catalyzes the synthesis of GMP from XMP. In Spiroplasma kunkelii, this protein is GMP synthase [glutamine-hydrolyzing].